The primary structure comprises 1039 residues: Kinesin-like protein KIN-5B (1039 aa).

In terms of domain architecture, Kinesin motor spans 48-390; sequence NVQVILRCKP…LDYAYRAKNI (343 aa). 134-141 contributes to the ATP binding site; sequence GQTGTGKT. Residues 1008-1039 are disordered; that stretch reads TLSEEHTSLEKISTKQGLGEANNRTPFLEVNK. Over residues 1010-1020 the composition is skewed to basic and acidic residues; that stretch reads SEEHTSLEKIS.

It belongs to the TRAFAC class myosin-kinesin ATPase superfamily. Kinesin family. KIN-5/BimC subfamily.

The protein localises to the cytoplasm. The protein resides in the cytoskeleton. It localises to the spindle. In terms of biological role, responsible for microtubule translocation. May be important for the organization of phragmoplast-specific arrays of microtubules. Plays an essential role in stabilizing the mitotic spindle. Required during mitotic cytokinesis. The protein is Kinesin-like protein KIN-5B of Arabidopsis thaliana (Mouse-ear cress).